The primary structure comprises 273 residues: Nitrogenase iron protein (273 aa).

An ATP-binding site is contributed by 8–15 (GKGGIGKS). Cysteine 95 is a [4Fe-4S] cluster binding site. Position 98 is an ADP-ribosylarginine; by dinitrogenase reductase ADP-ribosyltransferase (arginine 98). Cysteine 130 provides a ligand contact to [4Fe-4S] cluster.

This sequence belongs to the NifH/BchL/ChlL family. Homodimer. [4Fe-4S] cluster serves as cofactor. In terms of processing, the reversible ADP-ribosylation of Arg-98 inactivates the nitrogenase reductase and regulates nitrogenase activity.

The catalysed reaction is N2 + 8 reduced [2Fe-2S]-[ferredoxin] + 16 ATP + 16 H2O = H2 + 8 oxidized [2Fe-2S]-[ferredoxin] + 2 NH4(+) + 16 ADP + 16 phosphate + 6 H(+). The key enzymatic reactions in nitrogen fixation are catalyzed by the nitrogenase complex, which has 2 components: the iron protein and the molybdenum-iron protein. The protein is Nitrogenase iron protein of Roseiflexus sp. (strain RS-1).